A 311-amino-acid polypeptide reads, in one-letter code: Phosphopantothenate--cysteine ligase (311 aa).

An N-acetylalanine modification is found at alanine 2.

This sequence belongs to the PPC synthetase family. As to quaternary structure, homodimer.

The catalysed reaction is (R)-4'-phosphopantothenate + L-cysteine + ATP = N-[(R)-4-phosphopantothenoyl]-L-cysteine + AMP + diphosphate + H(+). It catalyses the reaction (R)-4'-phosphopantothenate + L-cysteine + CTP = N-[(R)-4-phosphopantothenoyl]-L-cysteine + CMP + diphosphate + H(+). It functions in the pathway cofactor biosynthesis; coenzyme A biosynthesis; CoA from (R)-pantothenate: step 2/5. Functionally, catalyzes the second step in the biosynthesis of coenzyme A from vitamin B5, where cysteine is conjugated to 4'-phosphopantothenate to form 4-phosphopantothenoylcysteine. Has a preference for ATP over CTP as a cosubstrate. In Homo sapiens (Human), this protein is Phosphopantothenate--cysteine ligase (PPCS).